The chain runs to 31 residues: Nemertide alpha-5 (31 aa).

Cystine bridges form between cysteine 2-cysteine 16, cysteine 9-cysteine 20, and cysteine 15-cysteine 26. Proline 28 and proline 29 each carry 4-hydroxyproline.

Belongs to the nemertide family. Confined to the epidermis and to the mucus layer.

The protein localises to the secreted. Highly potent toxin against both insect and some mammalian sodium channels (Nav). It potently inhibits inactivation of insect sodium channels of B.germanica (BgNav1) (EC(50)=7.8 nM) and also delays the inactivation of mammalian Nav with potent activity on Nav1.3/SCN3A and Nav1.4/SCN4A (hNav1.1/SCN1A; EC(50)=102.1 nM, rNav1.2/SCN2A; EC(50)=156.1 nM, rNav1.3/SCN3A; EC(50)=9.4 nM, rNav1.4/SCN4A; EC(50)=15.4 nM, hNav1.5/SCN5A; EC(50)=132.7 nM, mNav1.6/SCN8A; EC(50)=66.9 nM, hNav1.9/SCN9A; EC(50)=73 nM). 1 uM is enough to completely inhibits the inactivation, resulting in sustained non-inactivating currents. In addition, the toxin significantly enhances the recovery from inactivation, and the open state is not required for the toxin to interact with the channel. In vivo, injection into brine shrimp (Artemia salina) stops movement or causes death after 24 hours (EC(50)=0.4 uM). In Ramphogordius pseudolacteus (Ribbon worm), this protein is Nemertide alpha-5.